A 573-amino-acid polypeptide reads, in one-letter code: Acetolactate synthase large subunit (573 aa).

E51 is a binding site for thiamine diphosphate. Residues R153, 261-282 (HGTLEANTAMHESDLILGIGVR), and 304-323 (DIDPTSISKNVPVAIPIVGN) contribute to the FAD site. Residues 396-476 (QHQMFAALHY…VVIICLNNHF (81 aa)) form a thiamine pyrophosphate binding region. Mg(2+)-binding residues include D447 and N474.

This sequence belongs to the TPP enzyme family. In terms of assembly, dimer of large and small chains. It depends on Mg(2+) as a cofactor. Requires thiamine diphosphate as cofactor.

It carries out the reaction 2 pyruvate + H(+) = (2S)-2-acetolactate + CO2. It functions in the pathway amino-acid biosynthesis; L-isoleucine biosynthesis; L-isoleucine from 2-oxobutanoate: step 1/4. The protein operates within amino-acid biosynthesis; L-valine biosynthesis; L-valine from pyruvate: step 1/4. This is Acetolactate synthase large subunit (ilvI) from Haemophilus influenzae (strain ATCC 51907 / DSM 11121 / KW20 / Rd).